A 397-amino-acid chain; its full sequence is MAKEKFERNKPHVNVGTIGHVDHGKTTLTAALTRVCSEVFGSARVDFDKIDSAPEEKARGITINTAHVEYDSNIRHYAHVDCPGHADYVKNMITGAAQMDGAILVCSAADGPMPQTREHILLSRQVGVPYIVVFLNKADMVDDAELLELVEMEVRDLLSTYDFPGDDTPIIIGSALMALNGQDDNEMGTTAVKRLVETLDTYIPEPERAIDKPFLMPIEDVFSISGRGTVVTGRVERGIVRIQEEVEIVGLRDTQKTTCTGVEMFRKLLDEGRAGENCGVLLRGTKRDDVERGQVLVKPGTVKPHTKFTAEVYVLSKEEGGRHTPFFKGYRPQFYFRTTDVTGNCELPEGVEMVMPGDNIQMTVTLIKTIAMEDGLRFAIREGGRTVGAGVVAKVIE.

Residues 10-207 (KPHVNVGTIG…TLDTYIPEPE (198 aa)) form the tr-type G domain. A G1 region spans residues 19-26 (GHVDHGKT). 19–26 (GHVDHGKT) contributes to the GTP binding site. A Mg(2+)-binding site is contributed by Thr26. Positions 60–64 (GITIN) are G2. The interval 81 to 84 (DCPG) is G3. Residues 81–85 (DCPGH) and 136–139 (NKAD) each bind GTP. Residues 136–139 (NKAD) form a G4 region. A G5 region spans residues 174–176 (SAL).

This sequence belongs to the TRAFAC class translation factor GTPase superfamily. Classic translation factor GTPase family. EF-Tu/EF-1A subfamily. As to quaternary structure, monomer.

Its subcellular location is the cytoplasm. It carries out the reaction GTP + H2O = GDP + phosphate + H(+). In terms of biological role, GTP hydrolase that promotes the GTP-dependent binding of aminoacyl-tRNA to the A-site of ribosomes during protein biosynthesis. This Pseudomonas fluorescens (strain ATCC BAA-477 / NRRL B-23932 / Pf-5) protein is Elongation factor Tu.